A 339-amino-acid polypeptide reads, in one-letter code: Ferrochelatase (339 aa).

Residues His209 and Glu290 each coordinate Fe cation.

It belongs to the ferrochelatase family.

Its subcellular location is the cytoplasm. It catalyses the reaction heme b + 2 H(+) = protoporphyrin IX + Fe(2+). It participates in porphyrin-containing compound metabolism; protoheme biosynthesis; protoheme from protoporphyrin-IX: step 1/1. Its function is as follows. Catalyzes the ferrous insertion into protoporphyrin IX. This Rhizobium meliloti (strain 1021) (Ensifer meliloti) protein is Ferrochelatase.